Consider the following 350-residue polypeptide: S-adenosylmethionine:tRNA ribosyltransferase-isomerase (350 aa).

It belongs to the QueA family. In terms of assembly, monomer.

The protein resides in the cytoplasm. It carries out the reaction 7-aminomethyl-7-carbaguanosine(34) in tRNA + S-adenosyl-L-methionine = epoxyqueuosine(34) in tRNA + adenine + L-methionine + 2 H(+). It participates in tRNA modification; tRNA-queuosine biosynthesis. Its function is as follows. Transfers and isomerizes the ribose moiety from AdoMet to the 7-aminomethyl group of 7-deazaguanine (preQ1-tRNA) to give epoxyqueuosine (oQ-tRNA). The sequence is that of S-adenosylmethionine:tRNA ribosyltransferase-isomerase from Bacillus mycoides (strain KBAB4) (Bacillus weihenstephanensis).